We begin with the raw amino-acid sequence, 263 residues long: Probable esterase PIR7A (263 aa).

Residue Ser82 is the Acyl-ester intermediate of the active site. Residues Asp213 and His241 each act as charge relay system in the active site.

This sequence belongs to the AB hydrolase superfamily.

This chain is Probable esterase PIR7A (PIR7A), found in Oryza sativa subsp. indica (Rice).